Consider the following 466-residue polypeptide: Chromosomal replication initiator protein DnaA (466 aa).

The domain I, interacts with DnaA modulators stretch occupies residues 1–86 (MSLSLWQQCL…EVGTKPVTQT (86 aa)). Residues 86–129 (TLKTPVHNVVAPAQTTTAQPQRVAPAARSGWDNVPAPAEPTYRS) form a domain II region. The tract at residues 130–346 (NVNVKHTFDN…GALNRVIANA (217 aa)) is domain III, AAA+ region. Residues Gly174, Gly176, Lys177, and Thr178 each coordinate ATP. The tract at residues 347-466 (NFTGRAITID…FSNLIRTLSS (120 aa)) is domain IV, binds dsDNA.

Belongs to the DnaA family. Oligomerizes as a right-handed, spiral filament on DNA at oriC.

It is found in the cytoplasm. Its function is as follows. Plays an essential role in the initiation and regulation of chromosomal replication. ATP-DnaA binds to the origin of replication (oriC) to initiate formation of the DNA replication initiation complex once per cell cycle. Binds the DnaA box (a 9 base pair repeat at the origin) and separates the double-stranded (ds)DNA. Forms a right-handed helical filament on oriC DNA; dsDNA binds to the exterior of the filament while single-stranded (ss)DNA is stabiized in the filament's interior. The ATP-DnaA-oriC complex binds and stabilizes one strand of the AT-rich DNA unwinding element (DUE), permitting loading of DNA polymerase. After initiation quickly degrades to an ADP-DnaA complex that is not apt for DNA replication. Binds acidic phospholipids. The protein is Chromosomal replication initiator protein DnaA of Salmonella agona (strain SL483).